The sequence spans 276 residues: F-actin-capping protein subunit alpha (276 aa).

The protein belongs to the F-actin-capping protein alpha subunit family. Heterodimer of an alpha and a beta subunit.

Its subcellular location is the cytoplasm. The protein localises to the cytoskeleton. In terms of biological role, F-actin-capping proteins bind in a Ca(2+)-independent manner to the fast growing ends of actin filaments (barbed end) thereby blocking the exchange of subunits at these ends. Unlike other capping proteins (such as gelsolin and severin), these proteins do not sever actin filaments. In Aspergillus fumigatus (strain ATCC MYA-4609 / CBS 101355 / FGSC A1100 / Af293) (Neosartorya fumigata), this protein is F-actin-capping protein subunit alpha (cap1).